We begin with the raw amino-acid sequence, 345 residues long: Nuclear distribution protein nudE-like 1 (345 aa).

The stretch at 28–190 (QSFQEARDEL…LAVRERQQEV (163 aa)) forms a coiled coil. The interval 56–166 (VQAEQRNRDL…LDEKESLLVS (111 aa)) is self-association. The interval 64–189 (DLQADNQRLK…ELAVRERQQE (126 aa)) is interaction with KATNB1. The interval 114–133 (YVRELEQANDDLERAKRATI) is required for interaction with PAFAH1B1. An interaction with CENPF region spans residues 175 to 345 (RDLRQELAVR…SAPGMLPLSV (171 aa)). An interaction with YWHAE region spans residues 189–256 (EVTRKSAPSS…SARISALNIV (68 aa)). Residues 191–345 (TRKSAPSSPT…SAPGMLPLSV (155 aa)) are interaction with NEFL. The interaction with KATNA1 stretch occupies residues 195–256 (APSSPTLDCE…SARISALNIV (62 aa)). Serine 215 bears the Phosphoserine mark. The interval 217–240 (PATPVGKGTENSFPSPKAIPNGFG) is disordered. Threonine 219 bears the Phosphothreonine mark. Serine 231 carries the phosphoserine modification. Residues 241–280 (TSPLTPSARISALNIVGDLLRKVGALESKLAACRNFAKDQ) form an interaction with DISC1 region. Residue serine 242 is modified to Phosphoserine; by CDK1. Threonine 245 bears the Phosphothreonine; by CDK1 and MAPK1 mark. A required for localization to the centrosome and interaction with dynein, dynactin, tubulin gamma, PCM1 and PCNT region spans residues 256–291 (VGDLLRKVGALESKLAACRNFAKDQASRKSYVPGSV). Cysteine 273 carries the S-palmitoyl cysteine; by ZDHHC2, ZDHHC3 and ZDHHC7 lipid modification. The segment at 314-345 (KGAVNGFDPAPPPPGLGSSRPSSAPGMLPLSV) is disordered. Over residues 329–339 (LGSSRPSSAPG) the composition is skewed to low complexity. Position 344 is a phosphoserine (serine 344).

This sequence belongs to the nudE family. In terms of assembly, interacts with PLEKHM1 (via N- and C-terminus). Interacts with dynactin, PCM1 and PCNT. Interacts (via C-terminus) with CENPF. Self-associates. Interacts with DISC1, dynein, tubulin gamma, KATNA1, KATNB1, microtubules, PAFAHB1 and YWHAE. Interacts directly with NEFL and indirectly with NEFH. Interacts with ZNF365. Interacts with GTP-bound RAB9A; the interaction may lead to RAB9A-dynein motor tethering. Phosphorylated by CDK1 and MAPK1. Phosphorylated in mitosis. Phosphorylated by CDK5. Phosphorylation by CDK5 promotes interaction with KATNA1 and YWHAE. Post-translationally, palmitoylation at Cys-273 reduces affinity for dynein. In terms of tissue distribution, expressed in brain, liver, lung and testis (at protein level). Expressed in brain, epididymis, eye, heart, kidney, large intestine, liver, ovary, pancreas, prostate, skeletal muscle, smooth muscle, spleen, submaxillary gland, testis, thymus and thyroid. Within the brain expression is pronounced in the cortex, hippocampus, olfactory bulb, striatum, thalamic and hypothalamic structures and in the molecular layer of the cerebellum. Largely excluded from cortical progenitor cells which express NDE1.

It is found in the cytoplasm. The protein resides in the cytoskeleton. Its subcellular location is the microtubule organizing center. It localises to the centrosome. The protein localises to the chromosome. It is found in the centromere. The protein resides in the kinetochore. Its subcellular location is the spindle. In terms of biological role, required for organization of the cellular microtubule array and microtubule anchoring at the centrosome. May regulate microtubule organization at least in part by targeting the microtubule severing protein KATNA1 to the centrosome. Also positively regulates the activity of the minus-end directed microtubule motor protein dynein. May enhance dynein-mediated microtubule sliding by targeting dynein to the microtubule plus ends. Required for several dynein- and microtubule-dependent processes such as the maintenance of Golgi integrity, the centripetal motion of secretory vesicles and the coupling of the nucleus and centrosome. Also required during brain development for the migration of newly formed neurons from the ventricular/subventricular zone toward the cortical plate. Plays a role, together with DISC1, in the regulation of neurite outgrowth. Required for mitosis in some cell types but appears to be dispensible for mitosis in cortical neuronal progenitors, which instead requires NDE1. Facilitates the polymerization of neurofilaments from the individual subunits NEFH and NEFL. Positively regulates lysosome peripheral distribution and ruffled border formation in osteoclasts. Plays a role, together with DISC1, in the regulation of neurite outgrowth. May act as a RAB9A/B effector that tethers RAB9-associated late endosomes to the dynein motor for their retrograde transport to the trans-Golgi network. This chain is Nuclear distribution protein nudE-like 1, found in Mus musculus (Mouse).